Consider the following 371-residue polypeptide: 4-hydroxy-3-methylbut-2-en-1-yl diphosphate synthase (flavodoxin) (371 aa).

Residues cysteine 270, cysteine 273, cysteine 305, and glutamate 312 each contribute to the [4Fe-4S] cluster site.

Belongs to the IspG family. The cofactor is [4Fe-4S] cluster.

It carries out the reaction (2E)-4-hydroxy-3-methylbut-2-enyl diphosphate + oxidized [flavodoxin] + H2O + 2 H(+) = 2-C-methyl-D-erythritol 2,4-cyclic diphosphate + reduced [flavodoxin]. Its pathway is isoprenoid biosynthesis; isopentenyl diphosphate biosynthesis via DXP pathway; isopentenyl diphosphate from 1-deoxy-D-xylulose 5-phosphate: step 5/6. Converts 2C-methyl-D-erythritol 2,4-cyclodiphosphate (ME-2,4cPP) into 1-hydroxy-2-methyl-2-(E)-butenyl 4-diphosphate. The chain is 4-hydroxy-3-methylbut-2-en-1-yl diphosphate synthase (flavodoxin) from Psychrobacter arcticus (strain DSM 17307 / VKM B-2377 / 273-4).